A 336-amino-acid polypeptide reads, in one-letter code: D-erythrose-4-phosphate dehydrogenase (336 aa).

11–12 (RI) serves as a coordination point for NAD(+). Residues 153–155 (SCT), Arg-199, 212–213 (TK), and Arg-235 each bind substrate. The active-site Nucleophile is the Cys-154. Asn-317 contributes to the NAD(+) binding site.

This sequence belongs to the glyceraldehyde-3-phosphate dehydrogenase family. Epd subfamily. In terms of assembly, homotetramer.

Its subcellular location is the cytoplasm. The catalysed reaction is D-erythrose 4-phosphate + NAD(+) + H2O = 4-phospho-D-erythronate + NADH + 2 H(+). It functions in the pathway cofactor biosynthesis; pyridoxine 5'-phosphate biosynthesis; pyridoxine 5'-phosphate from D-erythrose 4-phosphate: step 1/5. Its function is as follows. Catalyzes the NAD-dependent conversion of D-erythrose 4-phosphate to 4-phosphoerythronate. The chain is D-erythrose-4-phosphate dehydrogenase from Aeromonas salmonicida (strain A449).